A 419-amino-acid polypeptide reads, in one-letter code: Indole prenyltransferase tdiB (419 aa).

58-59 (PS) is an L-tryptophan binding site. Substrate contacts are provided by arginine 81, lysine 165, tyrosine 167, arginine 236, lysine 238, tyrosine 240, tyrosine 330, and tyrosine 394.

It belongs to the tryptophan dimethylallyltransferase family.

It catalyses the reaction didemethylasterriquinone D + dimethylallyl diphosphate = asterriquinone C1 + diphosphate. The protein operates within secondary metabolite biosynthesis. In terms of biological role, indole prenyltransferase; part of the gene cluster that mediates the biosynthesis of terrequinone A, an antitumor agent. The first step in the biosynthetic pathway for terrequinone A is formation of indole pyruvic acid (IPA) from L-tryptophan by the aminotransferase tdiD. The nonribosomal peptide synthase tdiA then immediately converts unstable IPA to didemethylasterriquinone D (DDAQ D), via condensation of 2 IPA molecules. The symmetric connectivity of the 2 IPA molecules is thought to arise by head-to-tail dual Claisen condensations facilitated by the TE domain. TdiB then catalyzes reverse prenylation by transferring dimethylallyl diphosphate to carbon atom 2' of DDAQ D, to yield asterriquinone C-1. Finally, tdiC and tdiE enzymes robustly convert asterriquinone C-1 to terrequinone A via a transformation involving regular prenylation at carbon atom 5, which requires elimination of the hydroxy group on C-5. The polypeptide is Indole prenyltransferase tdiB (Emericella nidulans (strain FGSC A4 / ATCC 38163 / CBS 112.46 / NRRL 194 / M139) (Aspergillus nidulans)).